The sequence spans 550 residues: Glucose-6-phosphate isomerase (550 aa).

The active-site Proton donor is E356. Catalysis depends on residues H387 and K515.

The protein belongs to the GPI family.

It is found in the cytoplasm. The enzyme catalyses alpha-D-glucose 6-phosphate = beta-D-fructose 6-phosphate. It functions in the pathway carbohydrate biosynthesis; gluconeogenesis. Its pathway is carbohydrate degradation; glycolysis; D-glyceraldehyde 3-phosphate and glycerone phosphate from D-glucose: step 2/4. Functionally, catalyzes the reversible isomerization of glucose-6-phosphate to fructose-6-phosphate. The protein is Glucose-6-phosphate isomerase of Vibrio cholerae serotype O1 (strain ATCC 39315 / El Tor Inaba N16961).